The primary structure comprises 198 residues: Nucleoid occlusion factor SlmA (198 aa).

In terms of domain architecture, HTH tetR-type spans 10–70 (NRREEILQSL…SLIEFIEDSL (61 aa)). The segment at residues 33–52 (TTAKLAASVGVSEAALYRHF) is a DNA-binding region (H-T-H motif). Residues 117-145 (EQDKLQGRINQLFERIEAQLRQVLREKKM) adopt a coiled-coil conformation.

It belongs to the nucleoid occlusion factor SlmA family. In terms of assembly, homodimer. Interacts with FtsZ.

Its subcellular location is the cytoplasm. The protein resides in the nucleoid. Functionally, required for nucleoid occlusion (NO) phenomenon, which prevents Z-ring formation and cell division over the nucleoid. Acts as a DNA-associated cell division inhibitor that binds simultaneously chromosomal DNA and FtsZ, and disrupts the assembly of FtsZ polymers. SlmA-DNA-binding sequences (SBS) are dispersed on non-Ter regions of the chromosome, preventing FtsZ polymerization at these regions. The protein is Nucleoid occlusion factor SlmA of Enterobacter sp. (strain 638).